The primary structure comprises 538 residues: Chaperonin GroEL (538 aa).

Residues 29–32, 86–90, G413, 477–479, and D493 each bind ATP; these read TLGP, DGTTT, and NAA.

Belongs to the chaperonin (HSP60) family. As to quaternary structure, forms a cylinder of 14 subunits composed of two heptameric rings stacked back-to-back. Interacts with the co-chaperonin GroES.

Its subcellular location is the cytoplasm. It carries out the reaction ATP + H2O + a folded polypeptide = ADP + phosphate + an unfolded polypeptide.. Functionally, together with its co-chaperonin GroES, plays an essential role in assisting protein folding. The GroEL-GroES system forms a nano-cage that allows encapsulation of the non-native substrate proteins and provides a physical environment optimized to promote and accelerate protein folding. This Bifidobacterium adolescentis (strain ATCC 15703 / DSM 20083 / NCTC 11814 / E194a) protein is Chaperonin GroEL.